Here is a 260-residue protein sequence, read N- to C-terminus: Protein SVS1 (260 aa).

The N-terminal stretch at 1-19 (MIFKILCSLLLVTSNFASA) is a signal peptide. Residues Asn23, Asn249, and Asn256 are each glycosylated (N-linked (GlcNAc...) asparagine).

Required for vanadate resistance. The sequence is that of Protein SVS1 (SVS1) from Saccharomyces cerevisiae (strain ATCC 204508 / S288c) (Baker's yeast).